We begin with the raw amino-acid sequence, 823 residues long: Sphingomyelin phosphodiesterase 4 (823 aa).

2 positions are modified to phosphoserine: serine 130 and serine 245. A Phosphothreonine modification is found at threonine 665. Serine 749 carries the post-translational modification Phosphoserine. The chain crosses the membrane as a helical span at residues 776 to 796 (LLLLLMAFFVASLFCIGPLSC).

It depends on Mg(2+) as a cofactor. As to expression, expressed in skeletal muscle (at protein level). In terms of tissue distribution, expressed in skeletal muscle but a lower levels than isoform 1 (at protein level).

Its subcellular location is the endoplasmic reticulum membrane. It is found in the golgi apparatus membrane. The protein resides in the nucleus envelope. The protein localises to the cell membrane. It localises to the sarcolemma. It carries out the reaction a sphingomyelin + H2O = phosphocholine + an N-acylsphing-4-enine + H(+). Its activity is regulated as follows. Activated by phosphatidylserine and tumor necrosis factor (TNF). Inhibited by scyphostatin. Catalyzes the hydrolysis of membrane sphingomyelin to form phosphorylcholine and ceramide. It has a relevant role in the homeostasis of membrane sphingolipids, thereby influencing membrane integrity, and endoplasmic reticulum organization and function. May sensitize cells to DNA damage-induced apoptosis. In skeletal muscle, mediates TNF-stimulated oxidant production. The sequence is that of Sphingomyelin phosphodiesterase 4 (Smpd4) from Mus musculus (Mouse).